We begin with the raw amino-acid sequence, 222 residues long: U-scoloptoxin(11)-Sm5a (222 aa).

This sequence belongs to the scoloptoxin-11 family. Contains 8 disulfide bonds. Expressed by the venom gland.

The protein localises to the secreted. The sequence is that of U-scoloptoxin(11)-Sm5a from Scolopendra morsitans (Tanzanian blue ringleg centipede).